A 251-amino-acid polypeptide reads, in one-letter code: B3 domain-containing protein At2g24670 (251 aa).

The disordered stretch occupies residues 48–111 (TTPSTVMESK…SSKTREPTPG (64 aa)). The segment covering 56-70 (SKSHIHDHSLRESPT) has biased composition (basic and acidic residues). Residues 153 to 249 (VSQIVELEFL…TLYFALVPLY (97 aa)) constitute a DNA-binding region (TF-B3).

It is found in the nucleus. The protein is B3 domain-containing protein At2g24670 of Arabidopsis thaliana (Mouse-ear cress).